The following is a 163-amino-acid chain: MVGGGGSGGGLLENANPLIYERSGERPVTAGEEDEEVPDSIDAREIFDLIRSINDPEHPLTLEELNVVEQVRIQVSDPESTVAVAFTPTIPHCSMATLIGLSIKVKLLRSLPQRFKMDVHITPGTHASEHAVNKQLADKERVAAALENTHLLEVVNQCLSARS.

This sequence belongs to the MIP18 family. As to quaternary structure, component of the CIA complex. Component of the MMXD complex, which includes CIAO1, ERCC2, CIAO2B, MMS19 and SLC25A5. Interacts with CIAO1, ERCC2 and MMS19; the interactions are direct. Interacts with KIF4A; the interaction facilitates the transfer of Fe-S clusters to KIF4A to ensure proper localization of KIF4A to the mitotic machinery. Interacts with CCDC117; the interaction is direct.

The protein resides in the nucleus. The protein localises to the cytoplasm. It is found in the cytoskeleton. Its subcellular location is the spindle. In terms of biological role, component of the cytosolic iron-sulfur protein assembly (CIA) complex, a multiprotein complex that mediates the incorporation of iron-sulfur cluster into extramitochondrial Fe/S proteins. As a CIA complex component and in collaboration with CIAO1 and MMS19, binds to and facilitates the assembly of most cytosolic-nuclear Fe/S proteins. As part of the mitotic spindle-associated MMXD complex it plays a role in chromosome segregation, probably by facilitating iron-sulfur cluster assembly into ERCC2/XPD. Together with MMS19, facilitates the transfer of Fe-S clusters to the motor protein KIF4A, which ensures proper localization of KIF4A to mitotic machinery components to promote the progression of mitosis. The sequence is that of Cytosolic iron-sulfur assembly component 2B from Mus musculus (Mouse).